The following is a 173-amino-acid chain: Cytochrome c-type biogenesis protein CcmE (173 aa).

Topologically, residues Met1–Arg8 are cytoplasmic. Residues Phe9–Ala29 traverse the membrane as a helical; Signal-anchor for type II membrane protein segment. Over Leu30–Lys173 the chain is Periplasmic. Residues His131 and Tyr135 each coordinate heme. Positions Gly152–Lys173 are disordered. The segment covering Ala156–Lys173 has biased composition (basic and acidic residues).

Belongs to the CcmE/CycJ family.

The protein localises to the cell inner membrane. Heme chaperone required for the biogenesis of c-type cytochromes. Transiently binds heme delivered by CcmC and transfers the heme to apo-cytochromes in a process facilitated by CcmF and CcmH. The sequence is that of Cytochrome c-type biogenesis protein CcmE from Haemophilus influenzae (strain ATCC 51907 / DSM 11121 / KW20 / Rd).